The primary structure comprises 925 residues: Nuclear factor of activated T-cells, cytoplasmic 2 (925 aa).

The tract at residues 1-95 is disordered; that stretch reads MNAPERQPQP…FGEPDRVGPQ (95 aa). Serine 23 is subject to Phosphoserine. The 9aaTAD signature appears at 26–34; it reads DELDFSILF. A phosphoserine mark is found at serine 99, serine 107, and serine 110. The segment at 111–116 is calcineurin-binding; that stretch reads PRIEIT. Positions 119–199 are transactivation domain A (TAD-A); sequence HELIQAVGPL…CVSPNNGGPD (81 aa). A phosphoserine mark is found at serine 148, serine 168, serine 171, serine 172, serine 174, serine 175, serine 177, and serine 180. Residues 161 to 175 form a required for cytoplasmic retention of the phosphorylated form region; it reads YREPLCLSPASSGSS. A run of 2 repeats spans residues 184-200 and 213-229. The 3 X approximate SP repeats stretch occupies residues 184–286; that stretch reads SPYTSPCVSP…PQPSSHVAPQ (103 aa). The segment at 195–297 is disordered; sequence NGGPDDLCPQ…HGSPAGYPPV (103 aa). Phosphoserine occurs at positions 213, 217, 221, 236, and 243. Residues 214 to 224 show a composition bias toward polar residues; that stretch reads PRTSPIMSPRT. The Nuclear localization signal motif lies at 251-253; sequence KRR. Serine 255, serine 268, serine 274, serine 276, serine 280, serine 326, serine 330, and serine 363 each carry phosphoserine. Residues 264–281 are compositionally biased toward low complexity; the sequence is PPGASPQRSRSPSPQPSS. A 3; approximate repeat occupies 272-286; the sequence is SRSPSPQPSSHVAPQ. An RHD domain is found at 392–574; the sequence is ASLPPLEWPL…NPIECSQRSA (183 aa). The DNA-binding element occupies 421-428; sequence RAHYETEG. Residues 664–666 carry the Nuclear localization signal motif; that stretch reads KRK. Residues serine 755, serine 757, serine 759, serine 856, and serine 859 each carry the phosphoserine modification. Residues 839 to 894 form a disordered region; it reads PGTTRPGPPPVSQGQRLSPGSYPTVIQQQNATSQRAAKNGPPVSDQKEVLPAGVTI. The segment covering 862–874 has biased composition (polar residues); the sequence is TVIQQQNATSQRA. The short motif at 904 to 913 is the Nuclear export signal element; sequence YLDDVNEIIR.

As to quaternary structure, member of the multicomponent NFATC transcription complex that consists of at least two components, a pre-existing cytoplasmic component NFATC2 and an inducible nuclear component NFATC1. Other members such as NFATC4, NFATC3 or members of the activating protein-1 family, MAF, GATA4 and Cbp/p300 can also bind the complex. The phosphorylated form specifically interacts with XPO1; which mediates nuclear export. NFATC proteins bind to DNA as monomers. Interacts with NFATC2IP. Interacts with FOXP3. Interacts with TBX21 ('Thr-303' phosphorylated form). Interacts with KAT2A. Interacts with HOMER2 and HOMER3; this interaction competes with calcineurin/PPP3CA-binding and hence prevents NFATC2 dephosphorylation and activation. Interacts with protein phosphatase PPP3CA/calcineurin A. Interacts with AKAP5 (via leucine zipper domain); this is required for NFATC2/NFAT1 recruitment to CRAC channels. Post-translationally, in resting cells, phosphorylated by NFATC-kinase on at least 18 sites in the 99-363 region. Upon cell stimulation, all these sites except Ser-243 are dephosphorylated by calcineurin. Dephosphorylation induces a conformational change that simultaneously exposes an NLS and masks an NES, which results in nuclear localization. Simultaneously, Ser-53 or Ser-56 is phosphorylated; which is required for full transcriptional activity. Ubiquitinated in endothelial cells by RNF213 downstream of the non-canonical Wnt signaling pathway, leading to its degradation by the proteasome. As to expression, expressed in thymus, spleen, heart, testis, brain, placenta, muscle and pancreas. Isoform 1 is highly expressed in the small intestine, heart, testis, prostate, thymus, placenta and thyroid. Isoform 3 is highly expressed in stomach, uterus, placenta, trachea and thyroid.

Its subcellular location is the cytoplasm. It localises to the nucleus. In terms of biological role, plays a role in the inducible expression of cytokine genes in T-cells, especially in the induction of the IL-2, IL-3, IL-4, TNF-alpha or GM-CSF. Promotes invasive migration through the activation of GPC6 expression and WNT5A signaling pathway. Is involved in the negative regulation of chondrogenesis. Recruited by AKAP5 to ORAI1 pore-forming subunit of CRAC channels in Ca(2+) signaling microdomains where store-operated Ca(2+) influx is coupled to calmodulin and calcineurin signaling and activation of NFAT-dependent transcriptional responses. The protein is Nuclear factor of activated T-cells, cytoplasmic 2 (NFATC2) of Homo sapiens (Human).